The sequence spans 38 residues: Toxin BmK NSPK (38 aa).

3 disulfide bridges follow: C7–C27, C13–C32, and C17–C34.

Expressed by the venom gland.

The protein resides in the secreted. In terms of biological role, blocks voltage-gated potassium (Kv) channel and augments neurite extension via NGF/TrkA signaling pathway. This is Toxin BmK NSPK from Olivierus martensii (Manchurian scorpion).